The following is a 418-amino-acid chain: Putative competence-damage inducible protein (418 aa).

This sequence belongs to the CinA family.

The chain is Putative competence-damage inducible protein from Streptococcus pneumoniae serotype 2 (strain D39 / NCTC 7466).